The primary structure comprises 389 residues: Chitin-binding protein CbpD (389 aa).

The first 25 residues, 1–25 (MKHYSATLALLPLTLALFLPQAAHA), serve as a signal peptide directing secretion. The region spanning 26–208 (HGSMETPPSR…EAFYACIDVS (183 aa)) is the Chitin-binding type-4 domain.

Can be detected in the extracellular supernatant as a 43 kDa protein and a 23 kDa protein, both proteins have the same N-terminus. Only the larger protein binds chitin, which may protect it from further processing and/or degradation by elastase (lasB). It is not clear whether the short form is functional or a degradation product.

It localises to the secreted. In terms of biological role, binds chitin but does not hydrolyze it, has no detectable protease or staphylolytic activity. The polypeptide is Chitin-binding protein CbpD (Pseudomonas aeruginosa (strain ATCC 15692 / DSM 22644 / CIP 104116 / JCM 14847 / LMG 12228 / 1C / PRS 101 / PAO1)).